Consider the following 260-residue polypeptide: Hydroxyethylthiazole kinase (260 aa).

ATP-binding residues include Arg126 and Ser172. Gly199 is a binding site for substrate.

Belongs to the Thz kinase family. Mg(2+) serves as cofactor.

The catalysed reaction is 5-(2-hydroxyethyl)-4-methylthiazole + ATP = 4-methyl-5-(2-phosphooxyethyl)-thiazole + ADP + H(+). The protein operates within cofactor biosynthesis; thiamine diphosphate biosynthesis; 4-methyl-5-(2-phosphoethyl)-thiazole from 5-(2-hydroxyethyl)-4-methylthiazole: step 1/1. Its function is as follows. Catalyzes the phosphorylation of the hydroxyl group of 4-methyl-5-beta-hydroxyethylthiazole (THZ). This chain is Hydroxyethylthiazole kinase, found in Burkholderia thailandensis (strain ATCC 700388 / DSM 13276 / CCUG 48851 / CIP 106301 / E264).